The following is a 592-amino-acid chain: Aspartate--tRNA(Asp/Asn) ligase (592 aa).

Glu176 lines the L-aspartate pocket. Residues Gln200–Lys203 form an aspartate region. L-aspartate is bound at residue Arg222. ATP-binding positions include Arg222 to Glu224 and Gln231. His450 serves as a coordination point for L-aspartate. Glu484 lines the ATP pocket. An L-aspartate-binding site is contributed by Arg491. Residue Gly536 to Arg539 participates in ATP binding.

Belongs to the class-II aminoacyl-tRNA synthetase family. Type 1 subfamily. As to quaternary structure, homodimer.

The protein localises to the cytoplasm. It carries out the reaction tRNA(Asx) + L-aspartate + ATP = L-aspartyl-tRNA(Asx) + AMP + diphosphate. Aspartyl-tRNA synthetase with relaxed tRNA specificity since it is able to aspartylate not only its cognate tRNA(Asp) but also tRNA(Asn). Reaction proceeds in two steps: L-aspartate is first activated by ATP to form Asp-AMP and then transferred to the acceptor end of tRNA(Asp/Asn). The protein is Aspartate--tRNA(Asp/Asn) ligase of Anoxybacillus flavithermus (strain DSM 21510 / WK1).